A 463-amino-acid polypeptide reads, in one-letter code: ATP synthase subunit beta (463 aa).

151-158 (GGAGVGKT) serves as a coordination point for ATP.

Belongs to the ATPase alpha/beta chains family. F-type ATPases have 2 components, CF(1) - the catalytic core - and CF(0) - the membrane proton channel. CF(1) has five subunits: alpha(3), beta(3), gamma(1), delta(1), epsilon(1). CF(0) has three main subunits: a(1), b(2) and c(9-12). The alpha and beta chains form an alternating ring which encloses part of the gamma chain. CF(1) is attached to CF(0) by a central stalk formed by the gamma and epsilon chains, while a peripheral stalk is formed by the delta and b chains.

It is found in the cell membrane. It carries out the reaction ATP + H2O + 4 H(+)(in) = ADP + phosphate + 5 H(+)(out). Functionally, produces ATP from ADP in the presence of a proton gradient across the membrane. The catalytic sites are hosted primarily by the beta subunits. The polypeptide is ATP synthase subunit beta (Clostridium botulinum (strain ATCC 19397 / Type A)).